Reading from the N-terminus, the 244-residue chain is Phosphatidylserine decarboxylase proenzyme (244 aa).

Catalysis depends on S212, which acts as the Schiff-base intermediate with substrate; via pyruvic acid. S212 carries the post-translational modification Pyruvic acid (Ser); by autocatalysis.

The protein belongs to the phosphatidylserine decarboxylase family. PSD-A subfamily. As to quaternary structure, heterodimer of a large membrane-associated beta subunit and a small pyruvoyl-containing alpha subunit. Requires pyruvate as cofactor. Is synthesized initially as an inactive proenzyme. Formation of the active enzyme involves a self-maturation process in which the active site pyruvoyl group is generated from an internal serine residue via an autocatalytic post-translational modification. Two non-identical subunits are generated from the proenzyme in this reaction, and the pyruvate is formed at the N-terminus of the alpha chain, which is derived from the carboxyl end of the proenzyme. The post-translation cleavage follows an unusual pathway, termed non-hydrolytic serinolysis, in which the side chain hydroxyl group of the serine supplies its oxygen atom to form the C-terminus of the beta chain, while the remainder of the serine residue undergoes an oxidative deamination to produce ammonia and the pyruvoyl prosthetic group on the alpha chain.

The protein localises to the cell membrane. It carries out the reaction a 1,2-diacyl-sn-glycero-3-phospho-L-serine + H(+) = a 1,2-diacyl-sn-glycero-3-phosphoethanolamine + CO2. Its pathway is phospholipid metabolism; phosphatidylethanolamine biosynthesis; phosphatidylethanolamine from CDP-diacylglycerol: step 2/2. Catalyzes the formation of phosphatidylethanolamine (PtdEtn) from phosphatidylserine (PtdSer). The protein is Phosphatidylserine decarboxylase proenzyme of Granulibacter bethesdensis (strain ATCC BAA-1260 / CGDNIH1).